We begin with the raw amino-acid sequence, 66 residues long: uncharacterized protein (66 aa).

The disordered stretch occupies residues 1-21 (MPGGDRTGPWGQGPRTGRRAG).

This is an uncharacterized protein from Archaeoglobus fulgidus (strain ATCC 49558 / DSM 4304 / JCM 9628 / NBRC 100126 / VC-16).